Here is a 1620-residue protein sequence, read N- to C-terminus: Myb-like protein X (1620 aa).

Polar residues predominate over residues 1-13; the sequence is MSTIGNNASSIGN. 4 disordered regions span residues 1–57, 176–204, 294–318, and 450–849; these read MSTI…TTTT, TGSG…SNIG, FFQD…NMTE, and KEEK…TKSA. Positions 28-57 are enriched in low complexity; sequence PPTTTTTTTTTTTTTTTTPTTTTPTTTTTT. The segment covering 177–187 has biased composition (gly residues); that stretch reads GSGGIGGGGSG. Residues 310–421 form the SWIRM domain; that stretch reads GSGSNNMTEI…CFVNSGDYMN (112 aa). Residues 450 to 497 are compositionally biased toward basic and acidic residues; sequence KEEKERLEREEKERLEREEKQEKEEKERLEKEEKERLEREEKQEKEEK. Over residues 498–511 the composition is skewed to acidic residues; it reads EEKEEKEENEEKEE. A compositionally biased stretch (basic and acidic residues) spans 512–568; sequence KEEKEKEEKEEKEKQEKEDDKEKQENENEQEKIEKKENKNDSQNKEIKENHDKKDET. Positions 570 to 598 are enriched in low complexity; that stretch reads DSNNTTTTTTTTTTTSTNTLVAESSSSSS. Residues 606–628 are compositionally biased toward basic and acidic residues; sequence KEMKEQPVQENKDKEMMETDTTK. Over residues 629 to 645 the composition is skewed to low complexity; that stretch reads ENNGVETTETTNQTTDS. The span at 647–798 shows a compositional bias: basic and acidic residues; that stretch reads ETDKEMKDQP…EIKKDKLKEN (152 aa). A compositionally biased stretch (acidic residues) spans 799–834; sequence EEVEGEIEGENDEGEVVEEDEDEEMEIEEDEEDEED. The SANT domain occupies 925–977; it reads PEEFGWTDIETLLLLEGIEIFRDNWQEISDYIGGSKTPEQCLTHFIRLPIEDE. Residues 1049–1506 form a disordered region; sequence QPSKEELERI…DDDEDVEMET (458 aa). Basic and acidic residues-rich tracts occupy residues 1051-1195, 1219-1255, and 1264-1302; these read SKEE…DKSD, ETVE…KDDN, and HNKE…EKDL. Residues 1303-1325 are compositionally biased toward low complexity; that stretch reads NNLSESQSSNDQSKSNEQMSSDN. The span at 1338 to 1350 shows a compositional bias: polar residues; it reads TQITSKEQNITTD. Composition is skewed to low complexity over residues 1358-1382 and 1390-1416; these read TPTT…TTNT and NETN…ESNN. 2 stretches are compositionally biased toward acidic residues: residues 1467-1481 and 1493-1504; these read EENE…ENDL and VGEEDDDEDVEM.

It is found in the nucleus. This Dictyostelium discoideum (Social amoeba) protein is Myb-like protein X (mybX).